Reading from the N-terminus, the 305-residue chain is Sulfate adenylyltransferase subunit 2 (305 aa).

Belongs to the PAPS reductase family. CysD subfamily. Heterodimer composed of CysD, the smaller subunit, and CysN.

The enzyme catalyses sulfate + ATP + H(+) = adenosine 5'-phosphosulfate + diphosphate. Its pathway is sulfur metabolism; hydrogen sulfide biosynthesis; sulfite from sulfate: step 1/3. Functionally, with CysN forms the ATP sulfurylase (ATPS) that catalyzes the adenylation of sulfate producing adenosine 5'-phosphosulfate (APS) and diphosphate, the first enzymatic step in sulfur assimilation pathway. APS synthesis involves the formation of a high-energy phosphoric-sulfuric acid anhydride bond driven by GTP hydrolysis by CysN coupled to ATP hydrolysis by CysD. The chain is Sulfate adenylyltransferase subunit 2 from Myxococcus xanthus (strain DK1622).